A 123-amino-acid chain; its full sequence is MAWTPLLLLLLSHCTGSLSQPVLTQPPSSSASPGESARLTCTLPSDINVGSYNIYWYQQKPGSPPRYLLYYYSDSDKGQGSGVPSRFSGSKDASANTGILLISGLQSEDEADYYCMIWPSNAS.

The N-terminal stretch at 1 to 19 (MAWTPLLLLLLSHCTGSLS) is a signal peptide. Residues 20-44 (QPVLTQPPSSSASPGESARLTCTLP) form a framework-1 region. An Ig-like domain is found at 21 to 123 (PVLTQPPSSS…YCMIWPSNAS (103 aa)). The cysteines at positions 41 and 115 are disulfide-linked. The complementarity-determining-1 stretch occupies residues 45–53 (SDINVGSYN). The segment at 54–70 (IYWYQQKPGSPPRYLLY) is framework-2. Residues 71–77 (YYSDSDK) form a complementarity-determining-2 region. The framework-3 stretch occupies residues 78–115 (GQGSGVPSRFSGSKDASANTGILLISGLQSEDEADYYC). The segment at 116–123 (MIWPSNAS) is complementarity-determining-3.

Immunoglobulins are composed of two identical heavy chains and two identical light chains; disulfide-linked.

The protein resides in the secreted. It localises to the cell membrane. Functionally, v region of the variable domain of immunoglobulin light chains that participates in the antigen recognition. Immunoglobulins, also known as antibodies, are membrane-bound or secreted glycoproteins produced by B lymphocytes. In the recognition phase of humoral immunity, the membrane-bound immunoglobulins serve as receptors which, upon binding of a specific antigen, trigger the clonal expansion and differentiation of B lymphocytes into immunoglobulins-secreting plasma cells. Secreted immunoglobulins mediate the effector phase of humoral immunity, which results in the elimination of bound antigens. The antigen binding site is formed by the variable domain of one heavy chain, together with that of its associated light chain. Thus, each immunoglobulin has two antigen binding sites with remarkable affinity for a particular antigen. The variable domains are assembled by a process called V-(D)-J rearrangement and can then be subjected to somatic hypermutations which, after exposure to antigen and selection, allow affinity maturation for a particular antigen. This Homo sapiens (Human) protein is Immunoglobulin lambda variable 5-37.